The chain runs to 775 residues: Ribonucleoside-diphosphate reductase large subunit (775 aa).

Residues Thr-200, 215–216 (SC), Gly-246, 427–431 (NLCTE), and 606–610 (PTVSS) contribute to the substrate site. Cys-216 and Cys-444 are disulfide-bonded. Residue Asn-427 is the Proton acceptor of the active site. Cys-429 serves as the catalytic Cysteine radical intermediate. The Proton acceptor role is filled by Glu-431.

The protein belongs to the ribonucleoside diphosphate reductase large chain family. As to quaternary structure, heterotetramer composed of a homodimer of the large subunit (R1) and a homodimer of the small subunit (R2). Larger multisubunit protein complex are also active, composed of (R1)n(R2)n.

The catalysed reaction is a 2'-deoxyribonucleoside 5'-diphosphate + [thioredoxin]-disulfide + H2O = a ribonucleoside 5'-diphosphate + [thioredoxin]-dithiol. Ribonucleoside-diphosphate reductase holoenzyme provides the precursors necessary for viral DNA synthesis. Allows virus growth in non-dividing cells, as well as reactivation from latency in infected hosts. Catalyzes the biosynthesis of deoxyribonucleotides from the corresponding ribonucleotides. The chain is Ribonucleoside-diphosphate reductase large subunit from Homo sapiens (Human).